A 211-amino-acid polypeptide reads, in one-letter code: Adenylyl-sulfate kinase (211 aa).

36–43 (GLSGSGKS) contacts ATP. S110 serves as the catalytic Phosphoserine intermediate.

It belongs to the APS kinase family.

The enzyme catalyses adenosine 5'-phosphosulfate + ATP = 3'-phosphoadenylyl sulfate + ADP + H(+). Its pathway is sulfur metabolism; hydrogen sulfide biosynthesis; sulfite from sulfate: step 2/3. Functionally, catalyzes the synthesis of activated sulfate. This is Adenylyl-sulfate kinase (cysC) from Buchnera aphidicola subsp. Schizaphis graminum (strain Sg).